The chain runs to 67 residues: Beta-defensin 1 (67 aa).

The first 22 residues, M1–G22, serve as a signal peptide directing secretion. Intrachain disulfides connect C33/C62, C40/C55, and C45/C63.

Monomer. Homodimer. Highly expressed in tongue, nasopharyngeal mucosa and skin, and to a lower extent in the Eustachian tube, lung and trachea.

It localises to the secreted. Its subcellular location is the membrane. Has antibacterial activity against Gram-positive bacterium S.pneumoniae Serotype 14. Is also active against Gram-negative bacteria M.catarrhalis 1857, and non-typeable H.influenzae strains 86-028NP and 1128. Has antifungal activity against C.albicans. May have a role in maintaining sterility in the middle ear. May act as a ligand for C-C chemokine receptor CCR6. Positively regulates the sperm motility and bactericidal activity in a CCR6-dependent manner. Binds to CCR6 and triggers Ca2+ mobilization in the sperm which is important for its motility. The protein is Beta-defensin 1 (DEFB1) of Chinchilla lanigera (Long-tailed chinchilla).